Consider the following 515-residue polypeptide: Calcium-dependent protein kinase 2 (515 aa).

Positions M1–G51 are disordered. G2 carries the N-myristoyl glycine lipid modification. Low complexity predominate over residues A14–A38. Positions Y61–I319 constitute a Protein kinase domain. Residues L67 to T75 and K90 contribute to the ATP site. The active-site Proton acceptor is D185. Positions A325–I355 are autoinhibitory domain. EF-hand domains lie at E362 to K397, L398 to M433, D434 to L469, and D473 to E504. Ca(2+) is bound by residues D375, D377, S379, T381, E386, D411, D413, N415, T417, E422, D447, D449, S451, C453, E458, D482, D484, D486, R488, and E493.

This sequence belongs to the protein kinase superfamily. Ser/Thr protein kinase family. CDPK subfamily. In terms of tissue distribution, expressed in heading panicles, spikelets and mature pollen grains.

It localises to the membrane. It catalyses the reaction L-seryl-[protein] + ATP = O-phospho-L-seryl-[protein] + ADP + H(+). The catalysed reaction is L-threonyl-[protein] + ATP = O-phospho-L-threonyl-[protein] + ADP + H(+). Its activity is regulated as follows. Activated by calcium. Autophosphorylation may play an important role in the regulation of the kinase activity. Functionally, may play a role in signal transduction pathways that involve calcium as a second messenger. The sequence is that of Calcium-dependent protein kinase 2 from Oryza sativa subsp. japonica (Rice).